The following is a 478-amino-acid chain: Lysine-rich nucleolar protein 1 (478 aa).

The interval 1-231 is disordered; the sequence is MVSKTQKADL…THQEGDILLV (231 aa). A Glycyl lysine isopeptide (Lys-Gly) (interchain with G-Cter in SUMO2) cross-link involves residue lysine 7. Residues 17-27 show a composition bias toward basic residues; sequence KKKKKKKKKRV. The span at 33–45 shows a compositional bias: polar residues; that stretch reads EPETQYSVLNSND. Phosphoserine occurs at positions 51 and 59. Residues 54–63 are compositionally biased toward polar residues; it reads RATSPSNNVD. 2 stretches are compositionally biased toward basic residues: residues 73-82 and 120-129; these read SKRKKKKKSC and EKKKKRRKSL. A Glycyl lysine isopeptide (Lys-Gly) (interchain with G-Cter in SUMO2) cross-link involves residue lysine 140. Position 142 is a phosphoserine (serine 142). The segment covering 143-153 has biased composition (basic and acidic residues); that stretch reads PDPKHAKEVSK. 2 stretches are compositionally biased toward basic residues: residues 154 to 165 and 204 to 222; these read AGRKSKKQRKEK and QKRK…KKKT. Lysine 250 participates in a covalent cross-link: Glycyl lysine isopeptide (Lys-Gly) (interchain with G-Cter in SUMO1); alternate. Lysine 250 is covalently cross-linked (Glycyl lysine isopeptide (Lys-Gly) (interchain with G-Cter in SUMO2); alternate). Residues 258 to 314 form a disordered region; sequence PIDSPKAPGKKKVKSKKKVEQPVGEGLAVKRKKKKKKRKENGVKEDPWQEEKEESDT. At serine 261 the chain carries Phosphoserine. Residues 265–274 are compositionally biased toward basic residues; that stretch reads PGKKKVKSKK. Glycyl lysine isopeptide (Lys-Gly) (interchain with G-Cter in SUMO2) cross-links involve residues lysine 275 and lysine 287. Over residues 286-296 the composition is skewed to basic residues; the sequence is VKRKKKKKKRK. Residues 297-307 are compositionally biased toward basic and acidic residues; the sequence is ENGVKEDPWQE. Residue lysine 309 forms a Glycyl lysine isopeptide (Lys-Gly) (interchain with G-Cter in SUMO2) linkage. Residues 310 to 478 form an interaction with ZNF106 region; it reads EESDTDLEVV…NASKSIKLQD (169 aa). A Phosphoserine modification is found at serine 312. Threonine 314 is subject to Phosphothreonine. A Glycyl lysine isopeptide (Lys-Gly) (interchain with G-Cter in SUMO2) cross-link involves residue lysine 323. The segment covering 340 to 357 has biased composition (basic and acidic residues); sequence QEEIDRESGKTEASEPKK. A disordered region spans residues 340–378; sequence QEEIDRESGKTEASEPKKWTVGLSVKTEASEPKKWTGTQ. Residues lysine 373, lysine 393, lysine 395, lysine 427, and lysine 462 each participate in a glycyl lysine isopeptide (Lys-Gly) (interchain with G-Cter in SUMO2) cross-link.

As to quaternary structure, interacts with ZNF106. As to expression, expressed in testis.

It is found in the nucleus. The protein resides in the nucleolus. The polypeptide is Lysine-rich nucleolar protein 1 (Knop1) (Mus musculus (Mouse)).